The following is a 188-amino-acid chain: Elongation factor P (188 aa).

This sequence belongs to the elongation factor P family.

It is found in the cytoplasm. It participates in protein biosynthesis; polypeptide chain elongation. Functionally, involved in peptide bond synthesis. Stimulates efficient translation and peptide-bond synthesis on native or reconstituted 70S ribosomes in vitro. Probably functions indirectly by altering the affinity of the ribosome for aminoacyl-tRNA, thus increasing their reactivity as acceptors for peptidyl transferase. The polypeptide is Elongation factor P (Nitrobacter winogradskyi (strain ATCC 25391 / DSM 10237 / CIP 104748 / NCIMB 11846 / Nb-255)).